Here is a 472-residue protein sequence, read N- to C-terminus: Uronate isomerase (472 aa).

The protein belongs to the metallo-dependent hydrolases superfamily. Uronate isomerase family.

The enzyme catalyses D-glucuronate = D-fructuronate. The catalysed reaction is aldehydo-D-galacturonate = keto-D-tagaturonate. It functions in the pathway carbohydrate metabolism; pentose and glucuronate interconversion. The chain is Uronate isomerase from Xanthomonas euvesicatoria pv. vesicatoria (strain 85-10) (Xanthomonas campestris pv. vesicatoria).